Reading from the N-terminus, the 565-residue chain is Urocanate hydratase (565 aa).

Residues 61–62 (GG), Q139, 185–187 (GMG), E205, R210, 251–252 (NA), 272–276 (QTSAH), 282–283 (YL), and Y331 each bind NAD(+). C419 is a catalytic residue. A disordered region spans residues 453-472 (LDSGSVASPNRETESMRDGS). Basic and acidic residues predominate over residues 463-472 (RETESMRDGS). Residue G501 coordinates NAD(+).

Belongs to the urocanase family. The cofactor is NAD(+).

It is found in the cytoplasm. It catalyses the reaction 4-imidazolone-5-propanoate = trans-urocanate + H2O. It functions in the pathway amino-acid degradation; L-histidine degradation into L-glutamate; N-formimidoyl-L-glutamate from L-histidine: step 2/3. Its function is as follows. Catalyzes the conversion of urocanate to 4-imidazolone-5-propionate. The polypeptide is Urocanate hydratase (Pseudomonas syringae pv. syringae (strain B728a)).